The following is a 319-amino-acid chain: ATP-dependent 6-phosphofructokinase (319 aa).

Gly-11 lines the ATP pocket. ADP is bound at residue 21–25; that stretch reads RAVVR. ATP-binding positions include 72–73 and 102–105; these read RS and GDGS. Asp-103 provides a ligand contact to Mg(2+). Position 125–127 (125–127) interacts with substrate; it reads TID. Residue Asp-127 is the Proton acceptor of the active site. Residue Arg-154 participates in ADP binding. Substrate contacts are provided by residues Arg-162 and 169-171; that span reads MGR. ADP contacts are provided by residues 185–187, Arg-211, and 213–215; these read GAE and KKH. Substrate contacts are provided by residues Glu-222, Arg-243, and 249-252; that span reads HIQR.

This sequence belongs to the phosphofructokinase type A (PFKA) family. ATP-dependent PFK group I subfamily. Prokaryotic clade 'B1' sub-subfamily. In terms of assembly, homotetramer. Mg(2+) is required as a cofactor.

Its subcellular location is the cytoplasm. It catalyses the reaction beta-D-fructose 6-phosphate + ATP = beta-D-fructose 1,6-bisphosphate + ADP + H(+). Its pathway is carbohydrate degradation; glycolysis; D-glyceraldehyde 3-phosphate and glycerone phosphate from D-glucose: step 3/4. With respect to regulation, allosterically activated by ADP and other diphosphonucleosides, and allosterically inhibited by phosphoenolpyruvate. Catalyzes the phosphorylation of D-fructose 6-phosphate to fructose 1,6-bisphosphate by ATP, the first committing step of glycolysis. The polypeptide is ATP-dependent 6-phosphofructokinase (Oceanobacillus iheyensis (strain DSM 14371 / CIP 107618 / JCM 11309 / KCTC 3954 / HTE831)).